A 202-amino-acid chain; its full sequence is NAD(P)H dehydrogenase (quinone) 2 (202 aa).

Positions 4–190 (VLVLYYSSYG…AGAFHQGEIV (187 aa)) constitute a Flavodoxin-like domain. FMN contacts are provided by residues 10–15 (SSYGHI) and 78–80 (TRF). NAD(+) is bound at residue Tyr12. Trp98 contributes to the substrate binding site. FMN is bound by residues 113–119 (STGTQHG) and His134.

It belongs to the WrbA family. FMN serves as cofactor.

The enzyme catalyses a quinone + NADH + H(+) = a quinol + NAD(+). It carries out the reaction a quinone + NADPH + H(+) = a quinol + NADP(+). This is NAD(P)H dehydrogenase (quinone) 2 from Rhizobium meliloti (strain 1021) (Ensifer meliloti).